We begin with the raw amino-acid sequence, 506 residues long: AMP phosphorylase (506 aa).

AMP contacts are provided by residues Gly-168, 194–199 (SRAITG), and Thr-203. Asp-256 serves as the catalytic Proton donor. AMP-binding residues include Ser-264 and Lys-288.

This sequence belongs to the thymidine/pyrimidine-nucleoside phosphorylase family. Type 2 subfamily.

It catalyses the reaction AMP + phosphate = alpha-D-ribose 1,5-bisphosphate + adenine. The enzyme catalyses CMP + phosphate = cytosine + alpha-D-ribose 1,5-bisphosphate. The catalysed reaction is UMP + phosphate = alpha-D-ribose 1,5-bisphosphate + uracil. Its function is as follows. Catalyzes the conversion of AMP and phosphate to adenine and ribose 1,5-bisphosphate (R15P). Exhibits phosphorylase activity toward CMP and UMP in addition to AMP. Functions in an archaeal AMP degradation pathway, together with R15P isomerase and RubisCO. The sequence is that of AMP phosphorylase from Methanococcoides burtonii (strain DSM 6242 / NBRC 107633 / OCM 468 / ACE-M).